Consider the following 209-residue polypeptide: Ribosomal RNA large subunit methyltransferase E (209 aa).

S-adenosyl-L-methionine-binding residues include Gly63, Trp65, Asp83, Asp99, and Asp124. Lys164 (proton acceptor) is an active-site residue.

The protein belongs to the class I-like SAM-binding methyltransferase superfamily. RNA methyltransferase RlmE family.

It localises to the cytoplasm. The catalysed reaction is uridine(2552) in 23S rRNA + S-adenosyl-L-methionine = 2'-O-methyluridine(2552) in 23S rRNA + S-adenosyl-L-homocysteine + H(+). Functionally, specifically methylates the uridine in position 2552 of 23S rRNA at the 2'-O position of the ribose in the fully assembled 50S ribosomal subunit. The polypeptide is Ribosomal RNA large subunit methyltransferase E (Escherichia coli O81 (strain ED1a)).